We begin with the raw amino-acid sequence, 319 residues long: Ribosomal RNA small subunit methyltransferase H (319 aa).

Residues 39 to 41, aspartate 59, phenylalanine 83, aspartate 104, and glutamine 111 each bind S-adenosyl-L-methionine; that span reads GGH.

The protein belongs to the methyltransferase superfamily. RsmH family.

The protein resides in the cytoplasm. It catalyses the reaction cytidine(1402) in 16S rRNA + S-adenosyl-L-methionine = N(4)-methylcytidine(1402) in 16S rRNA + S-adenosyl-L-homocysteine + H(+). Its function is as follows. Specifically methylates the N4 position of cytidine in position 1402 (C1402) of 16S rRNA. The chain is Ribosomal RNA small subunit methyltransferase H from Ralstonia pickettii (strain 12D).